Consider the following 1288-residue polypeptide: VWFA and cache domain-containing protein 1 (1288 aa).

Residues 1 to 49 form the signal peptide; that stretch reads MAREPEEEETVRPAAVVRRCPRCPGWPGAPRPPLWLLCLVACWILGAVA. The Extracellular segment spans residues 50–1109; sequence DADFSILDEA…ITLNMIKSAP (1060 aa). A glycan (N-linked (GlcNAc...) asparagine) is linked at asparagine 159. Residues 242–457 enclose the VWFA domain; that stretch reads HIVVILDHGA…TTVGRFYTNL (216 aa). Cache domains lie at 467 to 546 and 786 to 867; these read FSLP…SEPP and LTGP…HPTL. A helical membrane pass occupies residues 1110–1130; sequence VGPVAGGIMGCIMVLVLAVYA. The Cytoplasmic portion of the chain corresponds to 1131–1288; sequence YRHQIHRRSH…VTVHTVDAEC (158 aa). Disordered regions lie at residues 1157 to 1176 and 1187 to 1237; these read NLEN…RGII and ERHV…VDVG. Over residues 1159–1174 the composition is skewed to basic and acidic residues; it reads ENDRDERDDDSHEDRG. Residues 1210-1229 are compositionally biased toward polar residues; the sequence is GYSTMSPQEDSENPPCNNDP.

Belongs to the calcium channel subunit alpha-2/delta family.

Its subcellular location is the membrane. May regulate voltage-dependent calcium channels. The sequence is that of VWFA and cache domain-containing protein 1 (Cachd1) from Mus musculus (Mouse).